Reading from the N-terminus, the 551-residue chain is Solute carrier family 22 member 6 (551 aa).

The Cytoplasmic segment spans residues Met-1 to Gln-9. A helical membrane pass occupies residues Val-10–Leu-30. Over Met-31 to Gln-135 the chain is Extracellular. N-linked (GlcNAc...) asparagine glycosylation is found at Asn-39, Asn-56, Asn-92, and Asn-113. The chain crosses the membrane as a helical span at residues Leu-136–Ala-156. Residues Asp-157–Val-164 lie on the Cytoplasmic side of the membrane. A helical membrane pass occupies residues Leu-165–Val-187. Topologically, residues Tyr-188 to Ser-195 are extracellular. The helical transmembrane segment at Gly-196 to Ile-216 threads the bilayer. Residues His-217–Thr-224 are Cytoplasmic-facing. The chain crosses the membrane as a helical span at residues Leu-225–Pro-245. The Extracellular portion of the chain corresponds to His-246–Arg-248. A helical transmembrane segment spans residues His-249–Ile-269. Over Glu-270–His-337 the chain is Cytoplasmic. Residues Leu-338–Met-358 traverse the membrane as a helical segment. At Asp-359–Tyr-368 the chain is on the extracellular side. A helical membrane pass occupies residues Leu-369–Ile-389. The Cytoplasmic segment spans residues Asn-390 to Arg-395. Residues Pro-396–Pro-416 traverse the membrane as a helical segment. Residues Lys-417–Ser-425 are Extracellular-facing. The chain crosses the membrane as a helical span at residues Leu-426–Gly-446. The Cytoplasmic segment spans residues Glu-447 to Ser-484. Residues Met-485–Pro-505 form a helical membrane-spanning segment. Topologically, residues Glu-506 to Leu-551 are extracellular. A disordered region spans residues Asp-514–Leu-551. Residues Lys-526–Gln-537 show a composition bias toward low complexity. The segment covering Gln-542–Leu-551 has biased composition (polar residues).

The protein belongs to the major facilitator (TC 2.A.1) superfamily. Organic cation transporter (TC 2.A.1.19) family. In terms of processing, glycosylated. Glycosylation is necessary for proper targeting of the transporter to the plasma membrane. In terms of tissue distribution, highly expressed in kidney; in the particular segment of the proximal tubule. In kidney, found preferentially in the cortex and outer medulla and weakly in the inner medulla. Expressed to a lower extent in brain.

The protein localises to the cell membrane. Its subcellular location is the basolateral cell membrane. It is found in the basal cell membrane. It carries out the reaction (6R)-L-erythro-5,6,7,8-tetrahydrobiopterin(out) + a dicarboxylate(in) = (6R)-L-erythro-5,6,7,8-tetrahydrobiopterin(in) + a dicarboxylate(out). It catalyses the reaction L-erythro-7,8-dihydrobiopterin(out) + a dicarboxylate(in) = L-erythro-7,8-dihydrobiopterin(in) + a dicarboxylate(out). The catalysed reaction is L-sepiapterin(out) + a dicarboxylate(in) = L-sepiapterin(in) + a dicarboxylate(out). The enzyme catalyses prostaglandin F2alpha(out) + a dicarboxylate(in) = prostaglandin F2alpha(in) + a dicarboxylate(out). It carries out the reaction prostaglandin E2(out) + a dicarboxylate(in) = prostaglandin E2(in) + a dicarboxylate(out). It catalyses the reaction 3',5'-cyclic AMP(out) + a dicarboxylate(in) = 3',5'-cyclic AMP(in) + a dicarboxylate(out). The catalysed reaction is 3',5'-cyclic GMP(out) + a dicarboxylate(in) = 3',5'-cyclic GMP(in) + a dicarboxylate(out). The enzyme catalyses urate(out) + a dicarboxylate(in) = urate(in) + a dicarboxylate(out). It carries out the reaction kynurenate(out) + glutarate(in) = kynurenate(in) + glutarate(out). It catalyses the reaction (indol-3-yl)acetate(out) + a dicarboxylate(in) = (indol-3-yl)acetate(in) + a dicarboxylate(out). The catalysed reaction is indoxyl sulfate(out) + a dicarboxylate(in) = indoxyl sulfate(in) + a dicarboxylate(out). The enzyme catalyses N-benzoylglycine(out) + a dicarboxylate(in) = N-benzoylglycine(in) + a dicarboxylate(out). It carries out the reaction 3-carboxy-4-methyl-5-propyl-2-furanpropanoate(out) + a dicarboxylate(in) = 3-carboxy-4-methyl-5-propyl-2-furanpropanoate(in) + a dicarboxylate(out). Functionally, secondary active transporter that functions as a Na(+)-independent organic anion (OA)/dicarboxylate antiporter where the uptake of one molecule of OA into the cell is coupled with an efflux of one molecule of intracellular dicarboxylate such as alpha-ketoglutarate or glutarate. Mediates the uptake of OA across the basolateral side of proximal tubule epithelial cells, thereby contributing to the renal elimination of endogenous OA from the systemic circulation into the urine. Function as a biopterin transporters involved in the uptake and the secretion of coenzymes tetrahydrobiopterin (BH4) dihydrobiopterin (BH2) and sepiapterin to urine, thereby determining baseline levels of blood biopterins. Transports prostaglandin E2 (PGE2) and prostaglandin F2-alpha (PGF2-alpha) and may contribute to their renal excretion. Also mediates the uptake of cyclic nucleotides such as cAMP and cGMP. Involved in the transport of neuroactive tryptophan metabolites kynurenate (KYNA) and xanthurenate (XA) and may contribute to their secretion from the brain. May transport glutamate. Also involved in the disposition of uremic toxins and potentially toxic xenobiotics by the renal organic anion secretory pathway, helping reduce their undesired toxicological effects on the body. Uremic toxins include the indoxyl sulfate (IS), hippurate, indole acetate (IA), 3-carboxy-4- methyl-5-propyl-2-furanpropionate(CMPF) and urate. Xenobiotics include the mycotoxin ochratoxin (OTA). May also contribute to the transport of organic compounds in testes across the blood-testis-barrier. May also work as a bidirectional OA/dicarboxylate exchanger. This is Solute carrier family 22 member 6 from Rattus norvegicus (Rat).